The sequence spans 302 residues: Phospho-N-acetylmuramoyl-pentapeptide-transferase (302 aa).

9 consecutive transmembrane segments (helical) span residues 1–21 (MIAA…KLFR), 42–62 (GTPT…GMIS), 68–88 (VLLG…LSVV), 123–143 (FFGF…LVIV), 154–174 (GLDG…WFFL), 178–198 (GVSE…LVFN), 204–224 (IFMG…VSVL), 229–249 (FYLV…ILQV), and 279–299 (IVAV…EIFG).

It belongs to the glycosyltransferase 4 family. MraY subfamily. Requires Mg(2+) as cofactor.

Its subcellular location is the cell inner membrane. The catalysed reaction is UDP-N-acetyl-alpha-D-muramoyl-L-alanyl-gamma-D-glutamyl-meso-2,6-diaminopimeloyl-D-alanyl-D-alanine + di-trans,octa-cis-undecaprenyl phosphate = di-trans,octa-cis-undecaprenyl diphospho-N-acetyl-alpha-D-muramoyl-L-alanyl-D-glutamyl-meso-2,6-diaminopimeloyl-D-alanyl-D-alanine + UMP. It participates in cell wall biogenesis; peptidoglycan biosynthesis. In terms of biological role, catalyzes the initial step of the lipid cycle reactions in the biosynthesis of the cell wall peptidoglycan: transfers peptidoglycan precursor phospho-MurNAc-pentapeptide from UDP-MurNAc-pentapeptide onto the lipid carrier undecaprenyl phosphate, yielding undecaprenyl-pyrophosphoryl-MurNAc-pentapeptide, known as lipid I. This Thermotoga petrophila (strain ATCC BAA-488 / DSM 13995 / JCM 10881 / RKU-1) protein is Phospho-N-acetylmuramoyl-pentapeptide-transferase.